The primary structure comprises 657 residues: Glycogen debranching enzyme (657 aa).

The active-site Nucleophile is the Asp336. Catalysis depends on Glu371, which acts as the Proton donor. Positions 460–479 (ANGEENRDGTNNNYSNNHGK) are disordered.

Belongs to the glycosyl hydrolase 13 family.

It carries out the reaction Hydrolysis of (1-&gt;6)-alpha-D-glucosidic linkages to branches with degrees of polymerization of three or four glucose residues in limit dextrin.. It functions in the pathway glycan degradation; glycogen degradation. In terms of biological role, removes maltotriose and maltotetraose chains that are attached by 1,6-alpha-linkage to the limit dextrin main chain, generating a debranched limit dextrin. This Escherichia coli O127:H6 (strain E2348/69 / EPEC) protein is Glycogen debranching enzyme.